The primary structure comprises 215 residues: GTP-binding nuclear protein Ran (215 aa).

The Small GTPase Ran-type domain maps to 6-170 (DIPTFKLVLV…LWLARKLLGD (165 aa)). GTP contacts are provided by residues 17-24 (DGGTGKTT), 35-41 (EKKYVAT), G67, 121-124 (NKVD), and 149-151 (SAK). A switch-I region spans residues 36–44 (KKYVATLGV). Positions 67 to 83 (GQEKFGGLRDGYYIQGQ) are switch-II.

Belongs to the small GTPase superfamily. Ran family. In terms of assembly, found in a nuclear export complex with RanGTP, exportin and pre-miRNA.

It localises to the nucleus. Its function is as follows. GTP-binding protein involved in nucleocytoplasmic transport. Required for the import of protein into the nucleus and also for RNA export. Involved in chromatin condensation and control of cell cycle. The sequence is that of GTP-binding nuclear protein Ran from Brugia malayi (Filarial nematode worm).